A 137-amino-acid polypeptide reads, in one-letter code: UPF0768 protein C1952.04c (137 aa).

A compositionally biased stretch (basic and acidic residues) spans 79-93 (QRRRREDLPTPERPE). The disordered stretch occupies residues 79–137 (QRRRREDLPTPERPEASAQQHAFFPGSSSQQTDIPNVRPQPHIPPPRKSDEAPPPYSYK). Over residues 119–137 (PHIPPPRKSDEAPPPYSYK) the composition is skewed to pro residues.

The protein belongs to the UPF0768 family.

The protein is UPF0768 protein C1952.04c of Schizosaccharomyces pombe (strain 972 / ATCC 24843) (Fission yeast).